Reading from the N-terminus, the 78-residue chain is Putative DNA-binding protein MT0521 (78 aa).

Positions 24–45 (LLTVAEVAALMRVSKMTVYRLV) form a DNA-binding region, H-T-H motif.

The polypeptide is Putative DNA-binding protein MT0521 (Mycobacterium tuberculosis (strain CDC 1551 / Oshkosh)).